A 428-amino-acid chain; its full sequence is Enolase (428 aa).

Gln163 serves as a coordination point for (2R)-2-phosphoglycerate. Glu205 functions as the Proton donor in the catalytic mechanism. Positions 242, 286, and 313 each coordinate Mg(2+). (2R)-2-phosphoglycerate contacts are provided by Lys338, Arg367, Ser368, and Lys389. Residue Lys338 is the Proton acceptor of the active site.

Belongs to the enolase family. The cofactor is Mg(2+).

Its subcellular location is the cytoplasm. It localises to the secreted. The protein localises to the cell surface. The enzyme catalyses (2R)-2-phosphoglycerate = phosphoenolpyruvate + H2O. It functions in the pathway carbohydrate degradation; glycolysis; pyruvate from D-glyceraldehyde 3-phosphate: step 4/5. Catalyzes the reversible conversion of 2-phosphoglycerate (2-PG) into phosphoenolpyruvate (PEP). It is essential for the degradation of carbohydrates via glycolysis. The sequence is that of Enolase from Lactobacillus acidophilus (strain ATCC 700396 / NCK56 / N2 / NCFM).